Here is a 320-residue protein sequence, read N- to C-terminus: Porphobilinogen deaminase (320 aa).

S-(dipyrrolylmethanemethyl)cysteine is present on C241.

Belongs to the HMBS family. Monomer. Dipyrromethane serves as cofactor.

It carries out the reaction 4 porphobilinogen + H2O = hydroxymethylbilane + 4 NH4(+). The protein operates within porphyrin-containing compound metabolism; protoporphyrin-IX biosynthesis; coproporphyrinogen-III from 5-aminolevulinate: step 2/4. Tetrapolymerization of the monopyrrole PBG into the hydroxymethylbilane pre-uroporphyrinogen in several discrete steps. The sequence is that of Porphobilinogen deaminase from Thermobifida fusca (strain YX).